The primary structure comprises 470 residues: FAD-dependent monooxygenase dpchE (470 aa).

An N-terminal signal peptide occupies residues 1–24 (MSEPHFKVIIVGGSITGLTLAHSL). The FAD site is built by Glu35, Gly49, and Arg108. A glycan (N-linked (GlcNAc...) asparagine) is linked at Asn128. The active site involves Arg193. FAD is bound by residues Asp312 and Ala325. Residues 447–463 (WAVVSRSVLLLVGLAIL) form a helical membrane-spanning segment.

It belongs to the paxM FAD-dependent monooxygenase family. It depends on FAD as a cofactor.

The protein localises to the membrane. It functions in the pathway secondary metabolite biosynthesis; terpenoid biosynthesis. In terms of biological role, FAD-dependent monooxygenase; part of the gene cluster that mediates the biosynthesis of the diterpenoid pyrones higginsianins A and B. The first step of the pathway is the synthesis of the alpha-pyrone moiety by the polyketide synthase dpchA via condensation of one acetyl-CoA starter unit with 3 malonyl-CoA units and 2 methylations. The alpha-pyrone is then combined with geranylgeranyl pyrophosphate (GGPP) formed by the GGPP synthase dpchD through the action of the prenyltransferase dpchC to yield a linear alpha-pyrone diterpenoid. Subsequent steps in the diterpenoid pyrone biosynthetic pathway involve the decalin core formation, which is initiated by the epoxidation of the C10-C11 olefin by the FAD-dependent oxidoreductase dpchE, and is followed by a cyclization cascade catalyzed by the terpene cyclase dpchB. The short chain dehydrogenase/reductase dpchG then oxidizes the 8S hydroxy group to a ketone and the short chain dehydrogenase/reductase dpchH reduces the ketone to the 8R hydroxy group to yield higginsianin B. Finally, the FAD-dependent oxidoreductase dpchF converts higginsianin B into higginsianin A. In Colletotrichum higginsianum (strain IMI 349063) (Crucifer anthracnose fungus), this protein is FAD-dependent monooxygenase dpchE.